Reading from the N-terminus, the 300-residue chain is Acetylglutamate kinase (300 aa).

Residues 72–73 (GG), R94, and N197 contribute to the substrate site.

The protein belongs to the acetylglutamate kinase family. ArgB subfamily.

The protein resides in the cytoplasm. The catalysed reaction is N-acetyl-L-glutamate + ATP = N-acetyl-L-glutamyl 5-phosphate + ADP. The protein operates within amino-acid biosynthesis; L-arginine biosynthesis; N(2)-acetyl-L-ornithine from L-glutamate: step 2/4. Its function is as follows. Catalyzes the ATP-dependent phosphorylation of N-acetyl-L-glutamate. The polypeptide is Acetylglutamate kinase (Azoarcus sp. (strain BH72)).